We begin with the raw amino-acid sequence, 353 residues long: MAASAALFSRLRSGLRVGARGLCTRLAPPPPRTPEQVTEIANRGGSKAQGPQHQPGSEGPSYAKKIALWIAGLLGAGGTVSIVYIFGNNPVDENGTKIPDEFDSDPILVQQLRRTYKYFKDYRQMIIEPTSPCLLPDPLREPYYQPPYTLVLELTGVLLHPEWSLATGWRFKKRPGIETLFQQLAPLYEIVIFTSETGMTAFPLIDSVDPHGFISYRLFRDATRYMEGHHVKDISCLNRDPARVVVVDCKKEAFRLQPFNGVALRPWDGNSDDRVLLDLSAFLKTIALNQVEDVRTVLEHYALEDDPLEAFKQRQSRLEQEEQQRLAELSKSNRQGLSFGSLASRLWPRSKQP.

A mitochondrion-targeting transit peptide spans 1 to 21; it reads MAASAALFSRLRSGLRVGARG. Residues 22–65 are Mitochondrial matrix-facing; sequence LCTRLAPPPPRTPEQVTEIANRGGSKAQGPQHQPGSEGPSYAKK. The interval 24–59 is disordered; sequence TRLAPPPPRTPEQVTEIANRGGSKAQGPQHQPGSEG. Residues 66-86 traverse the membrane as a helical segment; the sequence is IALWIAGLLGAGGTVSIVYIF. Residues 87–353 lie on the Mitochondrial intermembrane side of the membrane; that stretch reads GNNPVDENGT…SRLWPRSKQP (267 aa). The region spanning 143 to 286 is the FCP1 homology domain; the sequence is YYQPPYTLVL…LDLSAFLKTI (144 aa). A Phosphoserine modification is found at Ser-341.

This sequence belongs to the TIM50 family. As to quaternary structure, component of the TIM23 complex at least composed of TIMM23, TIMM17 (TIMM17A or TIMM17B) and TIMM50; within this complex, directly interacts with TIMM23. The complex interacts with the TIMM44 component of the PAM complex and with DNAJC15.

The protein resides in the mitochondrion inner membrane. In terms of biological role, essential component of the TIM23 complex, a complex that mediates the translocation of transit peptide-containing proteins across the mitochondrial inner membrane. Has some phosphatase activity in vitro; however such activity may not be relevant in vivo. This is Mitochondrial import inner membrane translocase subunit TIM50 (Timm50) from Mus musculus (Mouse).